The following is a 401-amino-acid chain: E3 ubiquitin-protein ligase DA2 (401 aa).

The RING-type; degenerate zinc-finger motif lies at 59–102 (CPICFLYYPSLNRSRCCMKSICTECFLQMKNPNSARPTQCPFCK). Basic and acidic residues predominate over residues 139–153 (KEMQDDEEKMQKRLE). Residues 139–164 (KEMQDDEEKMQKRLESCSSSTSAMTG) are disordered.

In terms of assembly, interacts with DA1 (via C-terminus).

It carries out the reaction S-ubiquitinyl-[E2 ubiquitin-conjugating enzyme]-L-cysteine + [acceptor protein]-L-lysine = [E2 ubiquitin-conjugating enzyme]-L-cysteine + N(6)-ubiquitinyl-[acceptor protein]-L-lysine.. The protein operates within protein modification; protein ubiquitination. Functionally, E3 ubiquitin-protein ligase involved in the regulation of organ and seed size. Acts synergistically with DA1 to regulate seed size. Functions synergistically with DA1 to restrict cell proliferation in the maternal integuments of ovules and developing seeds. Seems to function independently of BB. Possesses E3 ubiquitin-protein ligase activity in vitro. Polyubiquitinates DA1, DAR1 and DAR2, but not DAR3. The chain is E3 ubiquitin-protein ligase DA2 from Arabidopsis thaliana (Mouse-ear cress).